We begin with the raw amino-acid sequence, 173 residues long: Crossover junction endodeoxyribonuclease RuvC (173 aa).

Residues D8, E67, and D139 contribute to the active site. Residues D8, E67, and D139 each coordinate Mg(2+).

The protein belongs to the RuvC family. As to quaternary structure, homodimer which binds Holliday junction (HJ) DNA. The HJ becomes 2-fold symmetrical on binding to RuvC with unstacked arms; it has a different conformation from HJ DNA in complex with RuvA. In the full resolvosome a probable DNA-RuvA(4)-RuvB(12)-RuvC(2) complex forms which resolves the HJ. Mg(2+) is required as a cofactor.

The protein resides in the cytoplasm. The catalysed reaction is Endonucleolytic cleavage at a junction such as a reciprocal single-stranded crossover between two homologous DNA duplexes (Holliday junction).. The RuvA-RuvB-RuvC complex processes Holliday junction (HJ) DNA during genetic recombination and DNA repair. Endonuclease that resolves HJ intermediates. Cleaves cruciform DNA by making single-stranded nicks across the HJ at symmetrical positions within the homologous arms, yielding a 5'-phosphate and a 3'-hydroxyl group; requires a central core of homology in the junction. The consensus cleavage sequence is 5'-(A/T)TT(C/G)-3'. Cleavage occurs on the 3'-side of the TT dinucleotide at the point of strand exchange. HJ branch migration catalyzed by RuvA-RuvB allows RuvC to scan DNA until it finds its consensus sequence, where it cleaves and resolves the cruciform DNA. This chain is Crossover junction endodeoxyribonuclease RuvC, found in Salmonella choleraesuis (strain SC-B67).